The sequence spans 102 residues: MNKIRKGDEVIVLTGKDKGKRGTVQAVLGDKVAVEGVNVAKKHARPNPMLGTTGGVVDKVMPLHISNVALVDANGKPSRVGIKVEDGKRVRVLKTTGAVVAA.

It belongs to the universal ribosomal protein uL24 family. As to quaternary structure, part of the 50S ribosomal subunit.

Its function is as follows. One of two assembly initiator proteins, it binds directly to the 5'-end of the 23S rRNA, where it nucleates assembly of the 50S subunit. One of the proteins that surrounds the polypeptide exit tunnel on the outside of the subunit. The chain is Large ribosomal subunit protein uL24 from Cupriavidus pinatubonensis (strain JMP 134 / LMG 1197) (Cupriavidus necator (strain JMP 134)).